The chain runs to 607 residues: UPF0329 protein ECU06_1610 (607 aa).

Disordered regions lie at residues 312 to 410 and 531 to 570; these read VHEV…RSKG and TSSEKTGKGSSPSFGKGDDVDEIEEDGSSDMSGFQYPPGV. Basic and acidic residues predominate over residues 313–347; that stretch reads HEVKERESEEKRREEESLRNAEELLRMEEREKGEG. Residues 353–364 show a composition bias toward basic residues; it reads KGKKKRGKKGAG. Positions 365–374 are enriched in basic and acidic residues; that stretch reads KAKEESKEED. The span at 375 to 393 shows a compositional bias: acidic residues; that stretch reads RGEEEEESVEAEVPVEEMA. The span at 531–543 shows a compositional bias: polar residues; sequence TSSEKTGKGSSPS. A compositionally biased stretch (acidic residues) spans 549–558; sequence DVDEIEEDGS.

It belongs to the UPF0329 family.

The chain is UPF0329 protein ECU06_1610 from Encephalitozoon cuniculi (strain GB-M1) (Microsporidian parasite).